We begin with the raw amino-acid sequence, 449 residues long: Exodeoxyribonuclease 7 large subunit (449 aa).

Belongs to the XseA family. Heterooligomer composed of large and small subunits.

The protein localises to the cytoplasm. It carries out the reaction Exonucleolytic cleavage in either 5'- to 3'- or 3'- to 5'-direction to yield nucleoside 5'-phosphates.. In terms of biological role, bidirectionally degrades single-stranded DNA into large acid-insoluble oligonucleotides, which are then degraded further into small acid-soluble oligonucleotides. This is Exodeoxyribonuclease 7 large subunit from Aliivibrio fischeri (strain MJ11) (Vibrio fischeri).